We begin with the raw amino-acid sequence, 742 residues long: MSEAEAPLITEEAAERGLASSGSRRLSDGAGGQGSRKYRRRSDALAYGDRYQKAAALVDLAEDGVGIPEDVLNDTRFGRAMSFYFVYLRLDWLWSLNLFALILLNFLEKPLWCRKDALQAYDQRDLYFLGQLPYFSKTESLIYEGLTLVILVMDIFCPLSYEGLNIFWRSTTNKLKIVLLFILACDILVFAFSSQPFRLAPYIRVVFLIMTIRELRMCAITLAGLIGTYLNVLALSLLFLLFASWLAYVTFEDTPQGKTIFSSYGVTLYQMFVLFTTSNNPDVWVHAYKIPRWYSLFFIVYVLLGVYFLTNLILAVIYDSFKEQFAKQLVQVDSIRKNILQKAFDLIDTNNRGYLDREQCISLLNELNKYRSLPKTSREDFELIFAELDRSGDFKVTSEEFADLCNTIAIKFQKEPPPSYLEKFPFYHSPLCGRLKSFVRSRMFEYIIVFVLLINLVAVIIETTLDIENSSSQETWQEVEFFLGWIYVAEMALKIFSLGFGAYWMEGQNKFDFVLTWTIFIGETLTFAFPSKLPFLSNGEWIRYLLLGRVLRLTRILLQVQRFRAFVATFFTLMSSLMPYLGIVFCVLCMYCSIGLQIFGGIVYAGNPTLEETDLFNNDYLLFNFNDYPSGMVTLFNLLVMGNWQVWMESYWQLTGTSWSLIYFVSFYLISILLLLNLIVAFVLEAFFAEMELEKGEEVDIQNPTSGGIKKRRSMRVRSKGTMVDILLHHMLSNELDGSQNS.

The disordered stretch occupies residues 1–37 (MSEAEAPLITEEAAERGLASSGSRRLSDGAGGQGSRK). Residues 1 to 82 (MSEAEAPLIT…NDTRFGRAMS (82 aa)) lie on the Cytoplasmic side of the membrane. Residues 83–103 (FYFVYLRLDWLWSLNLFALIL) form a helical membrane-spanning segment. The Extracellular portion of the chain corresponds to 104-140 (LNFLEKPLWCRKDALQAYDQRDLYFLGQLPYFSKTES). A helical membrane pass occupies residues 141–161 (LIYEGLTLVILVMDIFCPLSY). At 162-176 (EGLNIFWRSTTNKLK) the chain is on the cytoplasmic side. Residues 177 to 197 (IVLLFILACDILVFAFSSQPF) form a helical membrane-spanning segment. Topologically, residues 198 to 204 (RLAPYIR) are extracellular. Residues 205 to 226 (VVFLIMTIRELRMCAITLAGLI) form a helical; Voltage-sensor membrane-spanning segment. A helical transmembrane segment spans residues 227–247 (GTYLNVLALSLLFLLFASWLA). The Extracellular portion of the chain corresponds to 248–258 (YVTFEDTPQGK). An intramembrane region (pore-forming) is located at residues 259–273 (TIFSSYGVTLYQMFV). Residues 274 to 296 (LFTTSNNPDVWVHAYKIPRWYSL) are Extracellular-facing. A helical membrane pass occupies residues 297–317 (FFIVYVLLGVYFLTNLILAVI). The Cytoplasmic segment spans residues 318–446 (YDSFKEQFAK…SFVRSRMFEY (129 aa)). EF-hand domains are found at residues 335–370 (IRKNILQKAFDLIDTNNRGYLDREQCISLLNELNKY) and 376–411 (TSREDFELIFAELDRSGDFKVTSEEFADLCNTIAIK). A helical transmembrane segment spans residues 447–467 (IIVFVLLINLVAVIIETTLDI). Topologically, residues 468–480 (ENSSSQETWQEVE) are extracellular. A glycan (N-linked (GlcNAc...) asparagine) is linked at Asn469. A helical transmembrane segment spans residues 481 to 501 (FFLGWIYVAEMALKIFSLGFG). The Cytoplasmic segment spans residues 502–510 (AYWMEGQNK). Residues 511 to 531 (FDFVLTWTIFIGETLTFAFPS) form a helical membrane-spanning segment. Residues 532-540 (KLPFLSNGE) are Extracellular-facing. The chain crosses the membrane as a helical; Voltage-sensor span at residues 541 to 558 (WIRYLLLGRVLRLTRILL). The Cytoplasmic portion of the chain corresponds to 559–582 (QVQRFRAFVATFFTLMSSLMPYLG). Residues 583 to 603 (IVFCVLCMYCSIGLQIFGGIV) traverse the membrane as a helical segment. Residues 604–627 (YAGNPTLEETDLFNNDYLLFNFND) are Extracellular-facing. The pore-forming intramembrane region spans 628–642 (YPSGMVTLFNLLVMG). Over 643-663 (NWQVWMESYWQLTGTSWSLIY) the chain is Extracellular. A helical membrane pass occupies residues 664 to 684 (FVSFYLISILLLLNLIVAFVL). The Cytoplasmic portion of the chain corresponds to 685–742 (EAFFAEMELEKGEEVDIQNPTSGGIKKRRSMRVRSKGTMVDILLHHMLSNELDGSQNS).

This sequence belongs to the calcium channel alpha-1 subunit (TC 1.A.1.11) family. Two pore calcium channel subfamily. Homodimer.

The protein localises to the membrane. With respect to regulation, inhibited by Al(3+). Its function is as follows. Functions as a voltage-gated inward-rectifying Ca(2+) channel (VDCC) across the plasma membrane that mediates sucrose-induced Ca(2+) influx in autotrophically grown leaf cells. Acts as the major ROS-responsive Ca(2+) channel and is the possible target of Al-dependent inhibition. Plays a regulatory role in defense responses. The polypeptide is Two pore calcium channel protein 1 (TPC1) (Triticum aestivum (Wheat)).